The chain runs to 589 residues: Protein drl-1 (589 aa).

A disordered region spans residues M1–T51. Positions I20–D41 are enriched in acidic residues. Positions W97–K373 constitute a Protein kinase domain. 3 helical membrane passes run G429–V449, L456–I476, and G491–C511.

The protein belongs to the protein kinase superfamily. STE Ser/Thr protein kinase family. Expressed in vulval and body wall muscles, hypodermis, seam cells and tissues next to pharynx and anus.

Its subcellular location is the membrane. Functionally, negatively regulates lifespan and health span probably by participating in nutrient sensing. This chain is Protein drl-1, found in Caenorhabditis elegans.